The chain runs to 209 residues: NAD(P)H dehydrogenase (quinone) (209 aa).

A Flavodoxin-like domain is found at 4–199 (VNIIFHSVHA…EMARYQGRHV (196 aa)). Residues 10–15 (SVHAHI) and 87–89 (TRY) each bind FMN. A substrate-binding site is contributed by Trp107. Residues 122-128 (SSGTQHG) and His143 contribute to the FMN site.

It belongs to the WrbA family. It depends on FMN as a cofactor.

It carries out the reaction a quinone + NADH + H(+) = a quinol + NAD(+). It catalyses the reaction a quinone + NADPH + H(+) = a quinol + NADP(+). The protein is NAD(P)H dehydrogenase (quinone) of Methanosarcina mazei (strain ATCC BAA-159 / DSM 3647 / Goe1 / Go1 / JCM 11833 / OCM 88) (Methanosarcina frisia).